We begin with the raw amino-acid sequence, 92 residues long: Evasin P675 (92 aa).

The N-terminal stretch at 1 to 24 is a signal peptide; it reads MEVKTFAFLQIAVIIALGLHLAPA. 3 disulfide bridges follow: Cys-44–Cys-63, Cys-48–Cys-65, and Cys-59–Cys-76. A glycan (N-linked (GlcNAc...) asparagine) is linked at Asn-47. The N-linked (GlcNAc...) asparagine glycan is linked to Asn-70.

The protein localises to the secreted. Salivary chemokine-binding protein which binds to host chemokines CXCL1, CXCL2, CXCL3, CXCL4, CXCL5, CXCL6, CXCL10, CXCL11 and CXCL13. The sequence is that of Evasin P675 from Ixodes ricinus (Common tick).